We begin with the raw amino-acid sequence, 1362 residues long: Integrator complex subunit 2 homolog (1362 aa).

The span at Met1 to Asn10 shows a compositional bias: low complexity. Disordered stretches follow at residues Met1–Ser20, Thr629–Asn660, and Asn928–Glu963. Over residues Asp945 to Glu955 the composition is skewed to basic and acidic residues.

This sequence belongs to the Integrator subunit 2 family. Component of the Integrator complex. The core complex associates with protein phosphatase 2A subunits, to form the Integrator-PP2A (INTAC) complex.

It localises to the nucleus. It is found in the cytoplasm. Component of the integrator complex, a multiprotein complex that terminates RNA polymerase II (Pol II) transcription in the promoter-proximal region of genes. The integrator complex provides a quality checkpoint during transcription elongation by driving premature transcription termination of transcripts that are unfavorably configured for transcriptional elongation: the complex terminates transcription by (1) catalyzing dephosphorylation of the C-terminal domain (CTD) of Pol II subunit polr2a, (2) degrading the exiting nascent RNA transcript via endonuclease activity and (3) promoting the release of Pol II from bound DNA. The integrator complex is also involved in terminating the synthesis of non-coding Pol II transcripts, such as enhancer RNAs (eRNAs), small nuclear RNAs (snRNAs), telomerase RNAs and long non-coding RNAs (lncRNAs). The chain is Integrator complex subunit 2 homolog (ints2) from Dictyostelium discoideum (Social amoeba).